Consider the following 331-residue polypeptide: L-lactate dehydrogenase A chain (331 aa).

NAD(+)-binding positions include 29-57 (GMVGMASAISILLKDLCDELAMVDVMEDK) and arginine 98. 3 residues coordinate substrate: arginine 105, asparagine 137, and arginine 168. Asparagine 137 is an NAD(+) binding site. Histidine 192 acts as the Proton acceptor in catalysis. A substrate-binding site is contributed by threonine 247.

This sequence belongs to the LDH/MDH superfamily. LDH family. Homotetramer.

Its subcellular location is the cytoplasm. It carries out the reaction (S)-lactate + NAD(+) = pyruvate + NADH + H(+). It participates in fermentation; pyruvate fermentation to lactate; (S)-lactate from pyruvate: step 1/1. Its function is as follows. Interconverts simultaneously and stereospecifically pyruvate and lactate with concomitant interconversion of NADH and NAD(+). The sequence is that of L-lactate dehydrogenase A chain (ldha) from Parachaenichthys charcoti (Charcot's dragonfish).